We begin with the raw amino-acid sequence, 1385 residues long: DNA-directed RNA polymerase subunit beta (1385 aa).

It belongs to the RNA polymerase beta chain family. The RNAP catalytic core consists of 2 alpha, 1 beta, 1 beta' and 1 omega subunit. When a sigma factor is associated with the core the holoenzyme is formed, which can initiate transcription.

It catalyses the reaction RNA(n) + a ribonucleoside 5'-triphosphate = RNA(n+1) + diphosphate. DNA-dependent RNA polymerase catalyzes the transcription of DNA into RNA using the four ribonucleoside triphosphates as substrates. The sequence is that of DNA-directed RNA polymerase subunit beta from Sulfurovum sp. (strain NBC37-1).